The primary structure comprises 1238 residues: ATP-dependent helicase/nuclease subunit A (1238 aa).

Residues Thr-6–Arg-474 enclose the UvrD-like helicase ATP-binding domain. Ala-27–Thr-34 lines the ATP pocket. The region spanning Pro-512–Gly-811 is the UvrD-like helicase C-terminal domain.

The protein belongs to the helicase family. AddA subfamily. In terms of assembly, heterodimer of AddA and AddB/RexB. Mg(2+) is required as a cofactor.

The catalysed reaction is Couples ATP hydrolysis with the unwinding of duplex DNA by translocating in the 3'-5' direction.. It carries out the reaction ATP + H2O = ADP + phosphate + H(+). In terms of biological role, the heterodimer acts as both an ATP-dependent DNA helicase and an ATP-dependent, dual-direction single-stranded exonuclease. Recognizes the chi site generating a DNA molecule suitable for the initiation of homologous recombination. The AddA nuclease domain is required for chi fragment generation; this subunit has the helicase and 3' -&gt; 5' nuclease activities. The chain is ATP-dependent helicase/nuclease subunit A from Clostridium kluyveri (strain NBRC 12016).